The chain runs to 334 residues: Protein-methionine-sulfoxide reductase catalytic subunit MsrP (334 aa).

A signal peptide (tat-type signal) is located at residues 1–44 (MKKNQFLKESDVTAESVFFMKRRQVLKALGISAAALSLPHAAHA). Mo-molybdopterin-binding positions include asparagine 88, 91–92 (YE), cysteine 146, threonine 181, asparagine 233, arginine 238, and 249–251 (GIK).

Belongs to the MsrP family. In terms of assembly, heterodimer of a catalytic subunit (MsrP) and a heme-binding subunit (MsrQ). Mo-molybdopterin is required as a cofactor. Post-translationally, predicted to be exported by the Tat system. The position of the signal peptide cleavage has not been experimentally proven.

The protein localises to the periplasm. The enzyme catalyses L-methionyl-[protein] + a quinone + H2O = L-methionyl-(S)-S-oxide-[protein] + a quinol. It carries out the reaction L-methionyl-[protein] + a quinone + H2O = L-methionyl-(R)-S-oxide-[protein] + a quinol. Part of the MsrPQ system that repairs oxidized periplasmic proteins containing methionine sulfoxide residues (Met-O), using respiratory chain electrons. Thus protects these proteins from oxidative-stress damage caused by reactive species of oxygen and chlorine generated by the host defense mechanisms. MsrPQ is essential for the maintenance of envelope integrity under bleach stress, rescuing a wide series of structurally unrelated periplasmic proteins from methionine oxidation, including the primary periplasmic chaperone SurA and the lipoprotein Pal. The catalytic subunit MsrP is non-stereospecific, being able to reduce both (R-) and (S-) diastereoisomers of methionine sulfoxide. The polypeptide is Protein-methionine-sulfoxide reductase catalytic subunit MsrP (Shigella boydii serotype 18 (strain CDC 3083-94 / BS512)).